A 107-amino-acid polypeptide reads, in one-letter code: CRISPR-associated endoribonuclease Cas2 (107 aa).

Aspartate 6 lines the Mg(2+) pocket.

Belongs to the CRISPR-associated endoribonuclease Cas2 protein family. As to quaternary structure, homodimer, forms a heterotetramer with a Cas1 homodimer. It depends on Mg(2+) as a cofactor.

Functionally, CRISPR (clustered regularly interspaced short palindromic repeat), is an adaptive immune system that provides protection against mobile genetic elements (viruses, transposable elements and conjugative plasmids). CRISPR clusters contain sequences complementary to antecedent mobile elements and target invading nucleic acids. CRISPR clusters are transcribed and processed into CRISPR RNA (crRNA). Functions as a ssRNA-specific endoribonuclease. Involved in the integration of spacer DNA into the CRISPR cassette. This chain is CRISPR-associated endoribonuclease Cas2, found in Streptococcus mutans serotype c (strain NN2025).